Reading from the N-terminus, the 485-residue chain is NADH-quinone oxidoreductase subunit N (485 aa).

A run of 14 helical transmembrane segments spans residues 8–28 (LIAL…MLSI), 35–55 (FLNA…LWFV), 71–91 (GFAM…CTFA), 105–125 (FYLL…ANHL), 127–147 (ALFL…GYAF), 159–179 (YTIL…LVYA), 203–223 (LLAG…LAPF), 235–255 (PAPV…GVVM), 271–291 (VVLG…ALSQ), 297–317 (LLGY…IALQ), 326–346 (VGVY…VVSL), 373–393 (AAVM…LGFI), 408–430 (WWLV…RVAV), and 455–475 (IVVL…QPLI).

This sequence belongs to the complex I subunit 2 family. As to quaternary structure, NDH-1 is composed of 13 different subunits. Subunits NuoA, H, J, K, L, M, N constitute the membrane sector of the complex.

It is found in the cell inner membrane. The catalysed reaction is a quinone + NADH + 5 H(+)(in) = a quinol + NAD(+) + 4 H(+)(out). Its function is as follows. NDH-1 shuttles electrons from NADH, via FMN and iron-sulfur (Fe-S) centers, to quinones in the respiratory chain. The immediate electron acceptor for the enzyme in this species is believed to be ubiquinone. Couples the redox reaction to proton translocation (for every two electrons transferred, four hydrogen ions are translocated across the cytoplasmic membrane), and thus conserves the redox energy in a proton gradient. The polypeptide is NADH-quinone oxidoreductase subunit N (Salmonella paratyphi C (strain RKS4594)).